Consider the following 177-residue polypeptide: Anti-apoptotic protein NR13 (177 aa).

The short motif at 75–94 (LETDGGLNWGRLLALVVFAG) is the BH1 element. A helical transmembrane segment spans residues 86–106 (LLALVVFAGTLAAALAESACE). The BH2 signature appears at 126–141 (EWMEEHGGWDGFCRFF). Residues 156 to 176 (SNAIMAAAGFGIAGLAFLLVV) form a helical membrane-spanning segment.

It belongs to the Bcl-2 family. As to quaternary structure, interacts with BAX. In terms of tissue distribution, mainly expressed in neural and muscular tissues.

It is found in the cell membrane. Functionally, shows anti-apoptotic properties. Counteract the pro-apoptotic activity of BAX. This Coturnix japonica (Japanese quail) protein is Anti-apoptotic protein NR13 (NR13).